We begin with the raw amino-acid sequence, 346 residues long: NADH-ubiquinone oxidoreductase chain 2 (346 aa).

11 consecutive transmembrane segments (helical) span residues 3–23, 25–45, 59–79, 96–116, 122–142, 149–169, 178–198, 200–220, 242–262, 274–294, and 322–342; these read PLIF…VMMS, HWLM…PILM, YFLT…INLM, IIMT…FWVP, ISLT…MSIL, INLN…GWGG, IMAY…VYNP, LTML…MLFI, TLIL…GFMP, SSII…YFYM, and ITLL…TPML.

The protein belongs to the complex I subunit 2 family. In terms of assembly, core subunit of respiratory chain NADH dehydrogenase (Complex I) which is composed of 45 different subunits. Interacts with TMEM242.

It localises to the mitochondrion inner membrane. The catalysed reaction is a ubiquinone + NADH + 5 H(+)(in) = a ubiquinol + NAD(+) + 4 H(+)(out). Its function is as follows. Core subunit of the mitochondrial membrane respiratory chain NADH dehydrogenase (Complex I) which catalyzes electron transfer from NADH through the respiratory chain, using ubiquinone as an electron acceptor. Essential for the catalytic activity and assembly of complex I. In Equus caballus (Horse), this protein is NADH-ubiquinone oxidoreductase chain 2.